The following is a 250-amino-acid chain: 2,3-bisphosphoglycerate-dependent phosphoglycerate mutase (250 aa).

Substrate is bound by residues 8–15 (RHGESTWN), 21–22 (TG), R60, 87–90 (ERHY), K98, and 114–115 (RR). H9 serves as the catalytic Tele-phosphohistidine intermediate. E87 serves as the catalytic Proton donor/acceptor. Residues 116 to 135 (SYDTPPPPLAANDPRSERSD) form a disordered region. 183–184 (GN) serves as a coordination point for substrate.

Belongs to the phosphoglycerate mutase family. BPG-dependent PGAM subfamily. In terms of assembly, homodimer.

It carries out the reaction (2R)-2-phosphoglycerate = (2R)-3-phosphoglycerate. The protein operates within carbohydrate degradation; glycolysis; pyruvate from D-glyceraldehyde 3-phosphate: step 3/5. Functionally, catalyzes the interconversion of 2-phosphoglycerate and 3-phosphoglycerate. This Polaromonas naphthalenivorans (strain CJ2) protein is 2,3-bisphosphoglycerate-dependent phosphoglycerate mutase.